A 508-amino-acid polypeptide reads, in one-letter code: CUGBP Elav-like family member 2 (508 aa).

Necessary for RNA-binding, TNNT2 exon 5 and NMDA R1 exon 21 inclusion regions lie at residues 1 to 283 and 357 to 508; these read MRCP…LQNL and LAGM…SKPY. 3 consecutive RRM domains span residues 40-123, 132-212, and 423-501; these read IKMF…PADS, RKLF…FADT, and ANLF…LKRS.

Belongs to the CELF/BRUNOL family. As to quaternary structure, interacts with A1CF. In terms of tissue distribution, expressed in frontal cortex. Isoform 1 is expressed in brain and lung. Isoform 2 is expressed in heart, brain, placenta, lung, liver, kidney, skeletal muscle and pancreas. Isoform 4 is expressed in heart, lung, skeletal muscle, kidney and pancreas.

Its subcellular location is the nucleus. It is found in the cytoplasm. Its function is as follows. RNA-binding protein implicated in the regulation of several post-transcriptional events. Involved in pre-mRNA alternative splicing, mRNA translation and stability. Mediates exon inclusion and/or exclusion in pre-mRNA that are subject to tissue-specific and developmentally regulated alternative splicing. Specifically activates exon 5 inclusion of TNNT2 in embryonic, but not adult, skeletal muscle. Activates TNNT2 exon 5 inclusion by antagonizing the repressive effect of PTB. Acts both as an activator and as a repressor of a pair of coregulated exons: promotes inclusion of the smooth muscle (SM) exon but exclusion of the non-muscle (NM) exon in actinin pre-mRNAs. Promotes inclusion of exonS 21 and exclusion of exon 5 of the NMDA receptor R1 pre-mRNA. Involved in the apoB RNA editing activity. Increases COX2 mRNA stability and inhibits COX2 mRNA translation in epithelial cells after radiation injury. Modulates the cellular apoptosis program by regulating COX2-mediated prostaglandin E2 (PGE2) expression. Binds to (CUG)n triplet repeats in the 3'-UTR of transcripts such as DMPK. Binds to the muscle-specific splicing enhancer (MSE) intronic sites flanking the TNNT2 alternative exon 5. Binds preferentially to UG-rich sequences, in particular UG repeat and UGUU motifs. Binds to apoB mRNA, specifically to AU-rich sequences located immediately upstream of the edited cytidine. Binds AU-rich sequences in the 3'-UTR of COX2 mRNA. Binds to an intronic RNA element responsible for the silencing of exon 21 splicing. Binds to (CUG)n repeats. May be a specific regulator of miRNA biogenesis. Binds to primary microRNA pri-MIR140 and, with CELF1, negatively regulates the processing to mature miRNA. In Homo sapiens (Human), this protein is CUGBP Elav-like family member 2 (CELF2).